The chain runs to 382 residues: Histidinol-phosphate aminotransferase (382 aa).

Position 215 is an N6-(pyridoxal phosphate)lysine (K215). Residues 363–382 (NIDNQSKTHSQTSSIRKGTI) form a disordered region.

This sequence belongs to the class-II pyridoxal-phosphate-dependent aminotransferase family. Histidinol-phosphate aminotransferase subfamily. Homodimer. The cofactor is pyridoxal 5'-phosphate.

The catalysed reaction is L-histidinol phosphate + 2-oxoglutarate = 3-(imidazol-4-yl)-2-oxopropyl phosphate + L-glutamate. It functions in the pathway amino-acid biosynthesis; L-histidine biosynthesis; L-histidine from 5-phospho-alpha-D-ribose 1-diphosphate: step 7/9. This Yersinia pseudotuberculosis serotype O:1b (strain IP 31758) protein is Histidinol-phosphate aminotransferase.